We begin with the raw amino-acid sequence, 258 residues long: Tryptophan synthase alpha chain (258 aa).

Residues glutamate 52 and aspartate 63 each act as proton acceptor in the active site.

It belongs to the TrpA family. As to quaternary structure, tetramer of two alpha and two beta chains.

The enzyme catalyses (1S,2R)-1-C-(indol-3-yl)glycerol 3-phosphate + L-serine = D-glyceraldehyde 3-phosphate + L-tryptophan + H2O. It functions in the pathway amino-acid biosynthesis; L-tryptophan biosynthesis; L-tryptophan from chorismate: step 5/5. Functionally, the alpha subunit is responsible for the aldol cleavage of indoleglycerol phosphate to indole and glyceraldehyde 3-phosphate. This Streptococcus pneumoniae serotype 4 (strain ATCC BAA-334 / TIGR4) protein is Tryptophan synthase alpha chain.